Reading from the N-terminus, the 640-residue chain is Threonine--tRNA ligase (640 aa).

The TGS domain occupies 1–61 (MPTITLPDGS…ACDADVTIIT (61 aa)). The tract at residues 243-534 (DHRKIGKALD…LIEQYAGNMP (292 aa)) is catalytic. Residues Cys-334, His-385, and His-511 each contribute to the Zn(2+) site.

Belongs to the class-II aminoacyl-tRNA synthetase family. Homodimer. Zn(2+) is required as a cofactor.

It localises to the cytoplasm. It catalyses the reaction tRNA(Thr) + L-threonine + ATP = L-threonyl-tRNA(Thr) + AMP + diphosphate + H(+). Catalyzes the attachment of threonine to tRNA(Thr) in a two-step reaction: L-threonine is first activated by ATP to form Thr-AMP and then transferred to the acceptor end of tRNA(Thr). Also edits incorrectly charged L-seryl-tRNA(Thr). The protein is Threonine--tRNA ligase of Dichelobacter nodosus (strain VCS1703A).